The sequence spans 195 residues: Small ribosomal subunit protein uS5 (195 aa).

The interval 1–20 (MAREREGGGRGRREDREERD) is disordered. Residues 23–86 (FVDKLVHINR…EAAKRGLIRV (64 aa)) enclose the S5 DRBM domain. The tract at residues 161–195 (DSPRSVAARRGIKVSTLQSRRRDADPADQSEAAVA) is disordered.

The protein belongs to the universal ribosomal protein uS5 family. As to quaternary structure, part of the 30S ribosomal subunit. Contacts proteins S4 and S8.

Its function is as follows. With S4 and S12 plays an important role in translational accuracy. Located at the back of the 30S subunit body where it stabilizes the conformation of the head with respect to the body. In Methylobacterium radiotolerans (strain ATCC 27329 / DSM 1819 / JCM 2831 / NBRC 15690 / NCIMB 10815 / 0-1), this protein is Small ribosomal subunit protein uS5.